The following is a 102-amino-acid chain: Small integral membrane protein 29 (102 aa).

An N-linked (GlcNAc...) asparagine glycan is attached at N3. The chain crosses the membrane as a helical span at residues 21-41 (VLGPFFLITLVGVVVAVVMYV).

It is found in the membrane. In Mus musculus (Mouse), this protein is Small integral membrane protein 29.